The chain runs to 479 residues: Poly(A) polymerase catalytic subunit (479 aa).

Active-site residues include D202 and D204. Residues D202, D204, and D253 each coordinate Ca(2+).

The protein belongs to the poxviridae poly(A) polymerase catalytic subunit family. In terms of assembly, heterodimer of a large (catalytic) subunit and a small (regulatory) subunit.

It carries out the reaction RNA(n) + ATP = RNA(n)-3'-adenine ribonucleotide + diphosphate. In terms of biological role, polymerase that creates the 3'-poly(A) tail of mRNA's. This Cynomys gunnisoni (Gunnison's prairie dog) protein is Poly(A) polymerase catalytic subunit (OPG063).